The following is a 701-amino-acid chain: MARKTPISLYRNIGISAHIDAGKTTTTERILFYTGLTHKLGEVHDGAATTDYMEQEQERGITITSAAVTSYWSGMAKQFPEHRFNIIDTPGHVDFTVEVERSMRVLDGAVMVYCAVGGVQPQSETVWRQANKYQVPRLAFVNKMDRQGANFFRVVEQMKTRLRANPVPIVIPVGAEDNFSGVVDLLKMKSIIWNEVDKGTTFTYGDIPAELVETAEEWRQNMIEAAAEASEELMDKYLGGDELTEEEIVGALRQRTLAGEIQPMLCGSAFKNKGVQRMLDAVVELLPAPTDIPPVQGVNPNTEEADSRQASDEEKFSALAFKMLNDKYVGQLTFIRVYSGVVKSGDTVLNSVKGTRERIGRLVQMTAADRTEIEEVRAGDIAAAIGLKDVTTGETLCAESAPIILERMEFPEPVIHIAVEPKTKADQEKMGIALNRLAKEDPSFRVRTDEESGQTIISGMGELHLEIIVDRMKREFGVEANIGAPQVAYRETIRKAVKAEYKHAKQSGGKGQYGHVVIEMEPMEPGGEGYEFIDEIKGGVIPREFIPSVDKGIRDTLPNGIVAGYPVVDVRIRLVFGSYHDVDSSQLAFELAASQAFKEGMRQASPALLEPIMAVEVETPEEYMGDVMGDLNRRRGVVLGMDDDGIGGKKVRAEVPLAEMFGYSTDLRSATQGRATYSMEFKKYSEAPAHIAAAVTEARKG.

Positions 8–290 (SLYRNIGISA…AVVELLPAPT (283 aa)) constitute a tr-type G domain. GTP is bound by residues 17–24 (AHIDAGKT), 88–92 (DTPGH), and 142–145 (NKMD).

The protein belongs to the TRAFAC class translation factor GTPase superfamily. Classic translation factor GTPase family. EF-G/EF-2 subfamily.

The protein resides in the cytoplasm. Its function is as follows. Catalyzes the GTP-dependent ribosomal translocation step during translation elongation. During this step, the ribosome changes from the pre-translocational (PRE) to the post-translocational (POST) state as the newly formed A-site-bound peptidyl-tRNA and P-site-bound deacylated tRNA move to the P and E sites, respectively. Catalyzes the coordinated movement of the two tRNA molecules, the mRNA and conformational changes in the ribosome. The sequence is that of Elongation factor G from Neisseria meningitidis serogroup B (strain ATCC BAA-335 / MC58).